Consider the following 290-residue polypeptide: ADP-ribosylation factor-like protein 13A (290 aa).

Residues 28–35 (GLNNSGKT), 71–75 (DLNGD), and 130–133 (NKQD) contribute to the GTP site. The interval 204–226 (SKNNTGSGERCSSHSFSTRTGMS) is disordered.

The protein belongs to the small GTPase superfamily. Arf family.

The sequence is that of ADP-ribosylation factor-like protein 13A (ARL13A) from Homo sapiens (Human).